The chain runs to 706 residues: Probable serine/threonine-protein kinase zyg-1 (706 aa).

The Protein kinase domain maps to tyrosine 13–methionine 249. ATP is bound by residues isoleucine 19–valine 27 and lysine 41. Aspartate 131 (proton acceptor) is an active-site residue. 2 stretches are compositionally biased toward basic and acidic residues: residues serine 261–alanine 290 and phenylalanine 323–glycine 336. Disordered stretches follow at residues serine 261 to glutamine 351 and serine 566 to serine 632. Residues serine 566–serine 579 show a composition bias toward low complexity. Polar residues-rich tracts occupy residues arginine 580–serine 592 and lysine 603–valine 629.

This sequence belongs to the protein kinase superfamily. Ser/Thr protein kinase family. As to quaternary structure, interacts with sel-10. Probably ubiquitinated by the SCF(sel-10) and SCF(lin-23) E3 ubiquitin ligase complexes, leading to its proteasomal degradation.

It localises to the cytoplasm. The protein resides in the cytoskeleton. The protein localises to the microtubule organizing center. It is found in the centrosome. Its subcellular location is the centriole. The catalysed reaction is L-seryl-[protein] + ATP = O-phospho-L-seryl-[protein] + ADP + H(+). It carries out the reaction L-threonyl-[protein] + ATP = O-phospho-L-threonyl-[protein] + ADP + H(+). In terms of biological role, protein kinase that plays a central role in centrosome duplication, control of centrosome size, spindle formation and nuclear envelope breakdown during cell divisions. Paternal copy is required to regulate synthesis of daughter centrioles prior to fertilization. Maternal copy regulates centrosome duplication during later cell cycles. Functions upstream of sas-5 and sas-6, and is required for their localization to the centrosome. Its role in nuclear envelope breakdown is mediated by the spindly-like protein spdl-1 and the RZZ complex, which in turn recruits the spindle checkpoint proteins mdf-1 and mdf-2, dynein and dynactin to unattached kinetochores. The chain is Probable serine/threonine-protein kinase zyg-1 from Caenorhabditis elegans.